A 52-amino-acid polypeptide reads, in one-letter code: Small ribosomal subunit protein uS14 (52 aa).

The Zn(2+) site is built by cysteine 17, cysteine 20, cysteine 35, and cysteine 38.

This sequence belongs to the universal ribosomal protein uS14 family. Zinc-binding uS14 subfamily. As to quaternary structure, part of the 30S ribosomal subunit. The cofactor is Zn(2+).

Functionally, binds 16S rRNA, required for the assembly of 30S particles. This is Small ribosomal subunit protein uS14 from Halobacterium salinarum (strain ATCC 700922 / JCM 11081 / NRC-1) (Halobacterium halobium).